The following is an 898-amino-acid chain: Aconitate hydratase 1 (898 aa).

An N-acetylalanine modification is found at alanine 2. Substrate contacts are provided by residues glutamine 90 and 209-211 (DSH). Cysteine 441, cysteine 507, and cysteine 510 together coordinate [4Fe-4S] cluster. Residues arginine 540, arginine 545, arginine 703, and 784-785 (SR) each bind substrate.

It belongs to the aconitase/IPM isomerase family. Monomer. The cofactor is [4Fe-4S] cluster. Mostly expressed in roots, stems and leaves, also present in stems and flowers.

The protein localises to the cytoplasm. It localises to the mitochondrion. It carries out the reaction citrate = D-threo-isocitrate. Its pathway is carbohydrate metabolism; tricarboxylic acid cycle; isocitrate from oxaloacetate: step 2/2. Its function is as follows. Catalyzes the isomerization of citrate to isocitrate via cis-aconitate. Contributes to oxidative stress tolerance. May have a role in respiration. This Arabidopsis thaliana (Mouse-ear cress) protein is Aconitate hydratase 1.